The sequence spans 104 residues: Chemokine-like protein MC148 (104 aa).

In terms of assembly, interacts with host CXCL12.

Plays a role in antagonizing the chemotaxis of multiple leukocyte subsets induced by CC and CXC chemokines. Displaces the interaction between CXCL12 and CXCR4 and thereby inactivates the antiviral activity of host CXCL12. This chain is Chemokine-like protein MC148 (MC148), found in Homo sapiens (Human).